The following is a 350-amino-acid chain: Hydroxymethylglutaryl-CoA synthase (350 aa).

E83 (proton donor/acceptor) is an active-site residue. The Acyl-thioester intermediate role is filled by C115. C115 and T156 together coordinate (3S)-3-hydroxy-3-methylglutaryl-CoA. Residue R204 coordinates CoA. (3S)-3-hydroxy-3-methylglutaryl-CoA-binding residues include T206 and H239. The active-site Proton donor/acceptor is the H239. K244 provides a ligand contact to CoA. N271 and S301 together coordinate (3S)-3-hydroxy-3-methylglutaryl-CoA.

It belongs to the thiolase-like superfamily. Archaeal HMG-CoA synthase family. In terms of assembly, interacts with acetoacetyl-CoA thiolase that catalyzes the precedent step in the pathway and with a DUF35 protein. The acetoacetyl-CoA thiolase/HMG-CoA synthase complex channels the intermediate via a fused CoA-binding site, which allows for efficient coupling of the endergonic thiolase reaction with the exergonic HMGCS reaction.

It catalyses the reaction acetoacetyl-CoA + acetyl-CoA + H2O = (3S)-3-hydroxy-3-methylglutaryl-CoA + CoA + H(+). Its pathway is metabolic intermediate biosynthesis; (R)-mevalonate biosynthesis; (R)-mevalonate from acetyl-CoA: step 2/3. Catalyzes the condensation of acetyl-CoA with acetoacetyl-CoA to form 3-hydroxy-3-methylglutaryl-CoA (HMG-CoA). Functions in the mevalonate (MVA) pathway leading to isopentenyl diphosphate (IPP), a key precursor for the biosynthesis of isoprenoid compounds that are building blocks of archaeal membrane lipids. The polypeptide is Hydroxymethylglutaryl-CoA synthase (Thermococcus sibiricus (strain DSM 12597 / MM 739)).